The sequence spans 822 residues: Stemar-13-ene synthase (822 aa).

The segment covering methionine 1–glycine 10 has biased composition (polar residues). The interval methionine 1–valine 29 is disordered. Residues aspartate 553, aspartate 557, asparagine 698, threonine 702, and glutamate 706 each coordinate Mg(2+). Positions aspartate 553–aspartate 557 match the DDXXD motif motif.

It belongs to the terpene synthase family. Mg(2+) serves as cofactor.

The enzyme catalyses 9alpha-copalyl diphosphate = stemar-13-ene + diphosphate. Functionally, catalyzes the conversion of syn-copalyl diphosphate to the phytoalexin precursor stemarene. The chain is Stemar-13-ene synthase (KSL8) from Oryza sativa subsp. japonica (Rice).